The primary structure comprises 206 residues: Adenylyl-sulfate kinase (206 aa).

36 to 43 (GLSGSGKS) contributes to the ATP binding site. The active-site Phosphoserine intermediate is Ser-110.

The protein belongs to the APS kinase family.

The enzyme catalyses adenosine 5'-phosphosulfate + ATP = 3'-phosphoadenylyl sulfate + ADP + H(+). Its pathway is sulfur metabolism; hydrogen sulfide biosynthesis; sulfite from sulfate: step 2/3. Catalyzes the synthesis of activated sulfate. This Buchnera aphidicola subsp. Acyrthosiphon pisum (strain APS) (Acyrthosiphon pisum symbiotic bacterium) protein is Adenylyl-sulfate kinase (cysC).